The primary structure comprises 561 residues: FAD-binding monooxygenase tazF (561 aa).

Residues 74–77 (TWLD), 86–87 (DI), and tyrosine 92 each bind FAD. 84 to 86 (GCD) contributes to the NADP(+) binding site. Residues 212–218 (NGSSALQ) and 235–236 (RH) contribute to the NADP(+) site.

The protein belongs to the FAD-binding monooxygenase family. FAD is required as a cofactor.

It functions in the pathway secondary metabolite biosynthesis. Its function is as follows. FAD-binding monooxygenase; part of the gene cluster that mediates the biosynthesis of azaterrilone A and other azaphilones, a class of fungal metabolites characterized by a highly oxygenated pyrano-quinone bicyclic core and exhibiting a broad range of bioactivities. The first step of the pathway begins with the non-reducing polyketide synthase tazA that assembles one acetyl-CoA starter unit, five malonyl-CoA units, and catalyzes a series of Claisen condensations, methylation, PT-mediated cyclization, and finally releases the first hexaketide precursor through the R-domain. The tazA product then undergoes reduction on its terminal ketone and the following pyran-ring formation by yet undetermined enzyme(s). Dehydration and enoyl reduction, possibly involving the trans-enoyl reductase tazE leads to the next intermediate. TazD is predicted as an acetyltransferase and might catalyze the acetylation steps leading to the synthesis of azaterrilone A. Azaterrilone A is not the final product of the taz pathway and both the highly reducing polyketide synthase tazB and the dual enzyme tazHJ catalyze late steps of the pathway, leading to the production of the 2 final stereoisomers that contain additional polyketide modification whose structures have still to be determined. This chain is FAD-binding monooxygenase tazF, found in Aspergillus terreus (strain NIH 2624 / FGSC A1156).